The primary structure comprises 308 residues: Carbamate kinase (308 aa).

It belongs to the carbamate kinase family.

The protein resides in the cytoplasm. It carries out the reaction hydrogencarbonate + NH4(+) + ATP = carbamoyl phosphate + ADP + H2O + H(+). The protein is Carbamate kinase of Synechocystis sp. (strain ATCC 27184 / PCC 6803 / Kazusa).